A 38-amino-acid chain; its full sequence is uncharacterized protein (38 aa).

This sequence belongs to the asfivirus C84L family.

This is an uncharacterized protein from Ornithodoros (relapsing fever ticks).